The following is a 211-amino-acid chain: Rho-related GTP-binding protein RhoF (211 aa).

Methionine 1 carries the N-acetylmethionine modification. Residue 26 to 33 (GDGGCGKT) coordinates GTP. Residues 48–56 (YAPSVFEKY) carry the Effector region motif. Residues 73-77 (DTAGQ) and 131-134 (CKTD) each bind GTP. Cysteine 208 carries the cysteine methyl ester modification. Cysteine 208 carries the S-geranylgeranyl cysteine lipid modification. Residues 209–211 (LLL) constitute a propeptide, removed in mature form.

Belongs to the small GTPase superfamily. Rho family.

The protein localises to the cell membrane. It is found in the cytoplasm. The protein resides in the cytoskeleton. Plasma membrane-associated small GTPase which cycles between an active GTP-bound and an inactive GDP-bound state. Causes the formation of thin, actin-rich surface projections called filopodia. Functions cooperatively with CDC42 and Rac to generate additional structures, increasing the diversity of actin-based morphology. This chain is Rho-related GTP-binding protein RhoF (Rhof), found in Mus musculus (Mouse).